We begin with the raw amino-acid sequence, 126 residues long: UPF0235 protein C15orf40 homolog (126 aa).

Residues Met1–Pro32 are disordered. Ser89 bears the Phosphoserine mark.

It belongs to the UPF0235 family.

This is UPF0235 protein C15orf40 homolog from Mus musculus (Mouse).